The primary structure comprises 270 residues: 3-methyl-2-oxobutanoate hydroxymethyltransferase (270 aa).

Residues aspartate 41 and aspartate 80 each contribute to the Mg(2+) site. Residues 41 to 42 (DS), aspartate 80, and lysine 109 each bind 3-methyl-2-oxobutanoate. A Mg(2+)-binding site is contributed by glutamate 111. The active-site Proton acceptor is glutamate 178.

The protein belongs to the PanB family. As to quaternary structure, homodecamer; pentamer of dimers. The cofactor is Mg(2+).

It localises to the cytoplasm. It carries out the reaction 3-methyl-2-oxobutanoate + (6R)-5,10-methylene-5,6,7,8-tetrahydrofolate + H2O = 2-dehydropantoate + (6S)-5,6,7,8-tetrahydrofolate. The protein operates within cofactor biosynthesis; (R)-pantothenate biosynthesis; (R)-pantoate from 3-methyl-2-oxobutanoate: step 1/2. In terms of biological role, catalyzes the reversible reaction in which hydroxymethyl group from 5,10-methylenetetrahydrofolate is transferred onto alpha-ketoisovalerate to form ketopantoate. This is 3-methyl-2-oxobutanoate hydroxymethyltransferase from Thermotoga maritima (strain ATCC 43589 / DSM 3109 / JCM 10099 / NBRC 100826 / MSB8).